The primary structure comprises 237 residues: MKSLSFLNHEFEAFPSPELALTDPNGLLAIGGDLRPERLLSAYYNGIFPWFNSDDPILWWSPDPRAVFIPGEIHISTSLRKYLKKQPWRITINHAFTDVMAGCAQPREKQSGTWITQEIQMAYRELHHTGHAHSIEVWEGERLIGGLYGLAIGQVFCGESMFHRKTNASKAAVAALQQHLLKMGFKLIDAQVMNPHLESLGAKAIKRIDFITLLSELRNNPLDPATWTTKEVILELE.

This sequence belongs to the L/F-transferase family.

The protein localises to the cytoplasm. The enzyme catalyses N-terminal L-lysyl-[protein] + L-leucyl-tRNA(Leu) = N-terminal L-leucyl-L-lysyl-[protein] + tRNA(Leu) + H(+). It carries out the reaction N-terminal L-arginyl-[protein] + L-leucyl-tRNA(Leu) = N-terminal L-leucyl-L-arginyl-[protein] + tRNA(Leu) + H(+). It catalyses the reaction L-phenylalanyl-tRNA(Phe) + an N-terminal L-alpha-aminoacyl-[protein] = an N-terminal L-phenylalanyl-L-alpha-aminoacyl-[protein] + tRNA(Phe). In terms of biological role, functions in the N-end rule pathway of protein degradation where it conjugates Leu, Phe and, less efficiently, Met from aminoacyl-tRNAs to the N-termini of proteins containing an N-terminal arginine or lysine. This Shewanella baltica (strain OS195) protein is Leucyl/phenylalanyl-tRNA--protein transferase.